Consider the following 227-residue polypeptide: Phosphatidylserine decarboxylase proenzyme (227 aa).

Ser169 acts as the Schiff-base intermediate with substrate; via pyruvic acid in catalysis. At Ser169 the chain carries Pyruvic acid (Ser); by autocatalysis. Residues Gly197 to Ser227 form a disordered region. A compositionally biased stretch (low complexity) spans Arg206–Ser227.

This sequence belongs to the phosphatidylserine decarboxylase family. PSD-A subfamily. In terms of assembly, heterodimer of a large membrane-associated beta subunit and a small pyruvoyl-containing alpha subunit. Pyruvate serves as cofactor. In terms of processing, is synthesized initially as an inactive proenzyme. Formation of the active enzyme involves a self-maturation process in which the active site pyruvoyl group is generated from an internal serine residue via an autocatalytic post-translational modification. Two non-identical subunits are generated from the proenzyme in this reaction, and the pyruvate is formed at the N-terminus of the alpha chain, which is derived from the carboxyl end of the proenzyme. The post-translation cleavage follows an unusual pathway, termed non-hydrolytic serinolysis, in which the side chain hydroxyl group of the serine supplies its oxygen atom to form the C-terminus of the beta chain, while the remainder of the serine residue undergoes an oxidative deamination to produce ammonia and the pyruvoyl prosthetic group on the alpha chain.

It is found in the cell membrane. The enzyme catalyses a 1,2-diacyl-sn-glycero-3-phospho-L-serine + H(+) = a 1,2-diacyl-sn-glycero-3-phosphoethanolamine + CO2. Its pathway is phospholipid metabolism; phosphatidylethanolamine biosynthesis; phosphatidylethanolamine from CDP-diacylglycerol: step 2/2. Functionally, catalyzes the formation of phosphatidylethanolamine (PtdEtn) from phosphatidylserine (PtdSer). The chain is Phosphatidylserine decarboxylase proenzyme from Salinibacter ruber (strain DSM 13855 / M31).